The sequence spans 856 residues: Lon protease (856 aa).

The Lon N-terminal domain occupies 68-261 (FPVLPLRDIV…KVLGLMESEI (194 aa)). Residue 412-419 (GPPGVGKT) coordinates ATP. In terms of domain architecture, Lon proteolytic spans 647–828 (EDQVGVVTGL…DEVLHHALLR (182 aa)). Active-site residues include Ser734 and Lys777.

It belongs to the peptidase S16 family. As to quaternary structure, homohexamer. Organized in a ring with a central cavity.

It is found in the cytoplasm. It catalyses the reaction Hydrolysis of proteins in presence of ATP.. In terms of biological role, ATP-dependent serine protease that mediates the selective degradation of mutant and abnormal proteins as well as certain short-lived regulatory proteins. Required for cellular homeostasis and for survival from DNA damage and developmental changes induced by stress. Degrades polypeptides processively to yield small peptide fragments that are 5 to 10 amino acids long. Binds to DNA in a double-stranded, site-specific manner. The protein is Lon protease of Azorhizobium caulinodans (strain ATCC 43989 / DSM 5975 / JCM 20966 / LMG 6465 / NBRC 14845 / NCIMB 13405 / ORS 571).